Consider the following 761-residue polypeptide: Xaa-Pro dipeptidyl-peptidase (761 aa).

Residues serine 349, aspartate 469, and histidine 499 each act as charge relay system in the active site.

The protein belongs to the peptidase S15 family. In terms of assembly, homodimer.

It is found in the cytoplasm. It catalyses the reaction Hydrolyzes Xaa-Pro-|- bonds to release unblocked, N-terminal dipeptides from substrates including Ala-Pro-|-p-nitroanilide and (sequentially) Tyr-Pro-|-Phe-Pro-|-Gly-Pro-|-Ile.. In terms of biological role, removes N-terminal dipeptides sequentially from polypeptides having unsubstituted N-termini provided that the penultimate residue is proline. This is Xaa-Pro dipeptidyl-peptidase from Streptococcus equi subsp. equi (strain 4047).